Reading from the N-terminus, the 38-residue chain is Large ribosomal subunit protein bL36 (38 aa).

The protein belongs to the bacterial ribosomal protein bL36 family.

This is Large ribosomal subunit protein bL36 from Chloroherpeton thalassium (strain ATCC 35110 / GB-78).